The chain runs to 197 residues: Inner membrane-spanning protein YciB (197 aa).

5 helical membrane-spanning segments follow: residues 36–56, 64–84, 90–110, 135–155, and 162–182; these read IYSA…ALFL, GQWL…TFHS, WKAP…HFIG, LAWI…AFTF, and FKVF…GVYL.

This sequence belongs to the YciB family.

Its subcellular location is the cell inner membrane. Functionally, plays a role in cell envelope biogenesis, maintenance of cell envelope integrity and membrane homeostasis. This chain is Inner membrane-spanning protein YciB, found in Pseudomonas putida (strain GB-1).